The following is a 429-amino-acid chain: Probable M18 family aminopeptidase 2 (429 aa).

Zn(2+)-binding residues include histidine 82, histidine 156, and histidine 401.

The protein belongs to the peptidase M18 family. It depends on Zn(2+) as a cofactor.

This chain is Probable M18 family aminopeptidase 2, found in Pseudomonas fluorescens (strain Pf0-1).